Reading from the N-terminus, the 289-residue chain is tRNA dimethylallyltransferase (289 aa).

9 to 16 serves as a coordination point for ATP; the sequence is GTTASGKT. Substrate is bound at residue 11 to 16; the sequence is TASGKT. The interval 34–37 is interaction with substrate tRNA; the sequence is DSLC.

It belongs to the IPP transferase family. Monomer. It depends on Mg(2+) as a cofactor.

The enzyme catalyses adenosine(37) in tRNA + dimethylallyl diphosphate = N(6)-dimethylallyladenosine(37) in tRNA + diphosphate. In terms of biological role, catalyzes the transfer of a dimethylallyl group onto the adenine at position 37 in tRNAs that read codons beginning with uridine, leading to the formation of N6-(dimethylallyl)adenosine (i(6)A). This Campylobacter jejuni subsp. doylei (strain ATCC BAA-1458 / RM4099 / 269.97) protein is tRNA dimethylallyltransferase.